A 55-amino-acid polypeptide reads, in one-letter code: Large ribosomal subunit protein bL33 (55 aa).

It belongs to the bacterial ribosomal protein bL33 family.

The chain is Large ribosomal subunit protein bL33 from Methylocella silvestris (strain DSM 15510 / CIP 108128 / LMG 27833 / NCIMB 13906 / BL2).